The following is a 117-amino-acid chain: Immunoglobulin kappa variable 1-17 (117 aa).

The first 22 residues, 1–22, serve as a signal peptide directing secretion; sequence MDMRVPAQLLGLLLLWFPGARC. The framework-1 stretch occupies residues 23–45; sequence DIQMTQSPSSLSASVGDRVTITC. Residues 24-117 form the Ig-like domain; it reads IQMTQSPSSL…YYCLQHNSYP (94 aa). C45 and C110 are oxidised to a cystine. The tract at residues 46-56 is complementarity-determining-1; it reads RASQGIRNDLG. Residues 57–71 form a framework-2 region; it reads WYQQKPGKAPKRLIY. Residues 72–78 form a complementarity-determining-2 region; sequence AASSLQS. The interval 79–110 is framework-3; it reads GVPSRFSGSGSGTEFTLTISSLQPEDFATYYC. The interval 111-117 is complementarity-determining-3; that stretch reads LQHNSYP.

Immunoglobulins are composed of two identical heavy chains and two identical light chains; disulfide-linked.

It is found in the secreted. Its subcellular location is the cell membrane. V region of the variable domain of immunoglobulin light chains that participates in the antigen recognition. Immunoglobulins, also known as antibodies, are membrane-bound or secreted glycoproteins produced by B lymphocytes. In the recognition phase of humoral immunity, the membrane-bound immunoglobulins serve as receptors which, upon binding of a specific antigen, trigger the clonal expansion and differentiation of B lymphocytes into immunoglobulins-secreting plasma cells. Secreted immunoglobulins mediate the effector phase of humoral immunity, which results in the elimination of bound antigens. The antigen binding site is formed by the variable domain of one heavy chain, together with that of its associated light chain. Thus, each immunoglobulin has two antigen binding sites with remarkable affinity for a particular antigen. The variable domains are assembled by a process called V-(D)-J rearrangement and can then be subjected to somatic hypermutations which, after exposure to antigen and selection, allow affinity maturation for a particular antigen. The chain is Immunoglobulin kappa variable 1-17 from Homo sapiens (Human).